The chain runs to 605 residues: Hepatocyte nuclear factor 1-alpha-A (605 aa).

Residues 1–31 (MASQLSYLQRELLQALLESGVTKEALKKALA) are dimerization. Residues 1–32 (MASQLSYLQRELLQALLESGVTKEALKKALAD) enclose the HNF-p1 domain. The interval 57-81 (QLPNGLGESHISEDESSDDGEDFTP) is disordered. A POU-specific atypical domain is found at 85 to 180 (KELERLSPEE…IARLFTFTEF (96 aa)). 6 interaction with DNA regions span residues 128–130 (QRE), 141–147 (HLSQHLN), 153–156 (KTQK), 206–209 (RFKW), 266–268 (RVY), and 273–276 (NRRK). The short motif at 200–208 (KKMRRNRFK) is the Nuclear localization signal element. Positions 202-282 (MRRNRFKWGP…NRRKEEAFRH (81 aa)) form a DNA-binding region, homeobox; HNF1-type. The segment covering 321–335 (DRSAVMANSQSTPSP) has biased composition (polar residues). The interval 321-343 (DRSAVMANSQSTPSPSALEPSHS) is disordered. The tract at residues 448–453 (PSHQLH) is not present in other members of the HNF1 family.

This sequence belongs to the HNF1 homeobox family. In terms of assembly, binds DNA as dimer. Forms a homodimer or heterodimer with HNF1-alpha-B. Potentially also form a heterodimer with HNF1-beta. Protein expressed in liver, stomach, small intestine, colon and kidney. Not expressed in spleen, lung, blood, heart muscle, skeletal muscle, testis and brain.

It localises to the nucleus. Its function is as follows. Transcriptional activator that regulates the tissue specific expression of multiple genes, especially in pancreas and liver. Binds to the hepatocyte specific promoter element HP1. Binds to the inverted palindrome 5'-GTTAATNATTAAC-3'. The sequence is that of Hepatocyte nuclear factor 1-alpha-A (hnf1a-a) from Xenopus laevis (African clawed frog).